Here is a 666-residue protein sequence, read N- to C-terminus: Translation factor guf1, mitochondrial (666 aa).

Residues 1–44 (MRGCLQLGRWLSAAPRCQAASLRPPTVFPSYRYNRSFSTTTIYY) constitute a mitochondrion transit peptide. One can recognise a tr-type G domain in the interval 68-248 (ERFRNFCIVA…TVVEKVPAPI (181 aa)). Residues 77–84 (AHVDHGKS), 141–145 (DTPGH), and 195–198 (NKVD) contribute to the GTP site.

It belongs to the TRAFAC class translation factor GTPase superfamily. Classic translation factor GTPase family. LepA subfamily.

The protein resides in the mitochondrion inner membrane. It carries out the reaction GTP + H2O = GDP + phosphate + H(+). In terms of biological role, promotes mitochondrial protein synthesis. May act as a fidelity factor of the translation reaction, by catalyzing a one-codon backward translocation of tRNAs on improperly translocated ribosomes. Binds to mitochondrial ribosomes in a GTP-dependent manner. The protein is Translation factor guf1, mitochondrial (guf1) of Penicillium rubens (strain ATCC 28089 / DSM 1075 / NRRL 1951 / Wisconsin 54-1255) (Penicillium chrysogenum).